The following is a 152-amino-acid chain: Deoxyuridine 5'-triphosphate nucleotidohydrolase (152 aa).

Substrate-binding positions include 71–73, asparagine 84, 88–90, and methionine 98; these read RSG and LID.

It belongs to the dUTPase family. The cofactor is Mg(2+).

The enzyme catalyses dUTP + H2O = dUMP + diphosphate + H(+). The protein operates within pyrimidine metabolism; dUMP biosynthesis; dUMP from dCTP (dUTP route): step 2/2. Functionally, this enzyme is involved in nucleotide metabolism: it produces dUMP, the immediate precursor of thymidine nucleotides and it decreases the intracellular concentration of dUTP so that uracil cannot be incorporated into DNA. The chain is Deoxyuridine 5'-triphosphate nucleotidohydrolase from Shewanella woodyi (strain ATCC 51908 / MS32).